The following is a 1249-amino-acid chain: Clustered mitochondria protein homolog (1249 aa).

The disordered stretch occupies residues 1–34 (MAQTNGELEHSKAETPEQLTNGNHPEETQEEEQN). Positions 321–565 (DITRSQENYL…RVTPLDVMWQ (245 aa)) constitute a Clu domain. 2 disordered regions span residues 610–638 (VETA…EALD) and 874–907 (VPAT…PEKP). Residues 613-638 (ASKEKSEENAESKEEGSEEKSEEALD) show a composition bias toward basic and acidic residues. 3 TPR repeats span residues 975-1008 (AKLY…TERT), 1017-1050 (ILSY…WKII), and 1059-1092 (ITTM…CESL). Residues 1178 to 1191 (TRTLGTKVQPQVGQ) are compositionally biased toward polar residues. The segment at 1178 to 1249 (TRTLGTKVQP…KLRGSKKSSA (72 aa)) is disordered. The segment covering 1192 to 1205 (SAPSASGASSANPS) has biased composition (low complexity).

Belongs to the CLU family. As to quaternary structure, may associate with the eukaryotic translation initiation factor 3 (eIF-3) complex.

It localises to the cytoplasm. Its function is as follows. mRNA-binding protein involved in proper cytoplasmic distribution of mitochondria. This is Clustered mitochondria protein homolog from Aspergillus oryzae (strain ATCC 42149 / RIB 40) (Yellow koji mold).